The following is a 795-amino-acid chain: Copper-exporting P-type ATPase (795 aa).

HMA domains follow at residues 5-70 (QNAT…YDVV) and 72-138 (DKAE…YDAQ). 4 residues coordinate Cu(+): Cys16, Cys19, Cys83, and Cys86. 6 helical membrane-spanning segments follow: residues 161-181 (LMISTILSLPLLMTMLVHLFN), 187-207 (ILMNPWFQFILATPIQFIIGW), 224-244 (MDVLVALGTSAAYFYSIYEMI), 256-276 (LYFETSAVLITLILFGKYLEA), 412-432 (YFVPIVIAIALLTFLIWITLV), and 440-460 (ALVAAISVLVIACPCALGLAT). Catalysis depends on Asp496, which acts as the 4-aspartylphosphate intermediate. Mg(2+) contacts are provided by Asp690 and Asp694. Transmembrane regions (helical) follow at residues 747 to 764 (NLFWAFGYNIAGIPIAAM) and 770 to 788 (WIAGAAMALSSVSVVSNAL).

Belongs to the cation transport ATPase (P-type) (TC 3.A.3) family. Type IB subfamily.

Its subcellular location is the cell membrane. It catalyses the reaction Cu(+)(in) + ATP + H2O = Cu(+)(out) + ADP + phosphate + H(+). Its function is as follows. Involved in copper export. The sequence is that of Copper-exporting P-type ATPase (copA) from Staphylococcus haemolyticus (strain JCSC1435).